We begin with the raw amino-acid sequence, 338 residues long: NADPH dehydrogenase (338 aa).

An FMN-binding site is contributed by 23 to 26; sequence SPMC. Position 28 (Y28) interacts with substrate. Residues A60 and Q102 each contribute to the FMN site. 164 to 167 provides a ligand contact to substrate; sequence HGAH. Residues R215 and 307–308 each bind FMN; that span reads GR.

It belongs to the NADH:flavin oxidoreductase/NADH oxidase family. NamA subfamily. In terms of assembly, homotetramer. FMN serves as cofactor.

The enzyme catalyses A + NADPH + H(+) = AH2 + NADP(+). In terms of biological role, catalyzes the reduction of the double bond of an array of alpha,beta-unsaturated aldehydes and ketones. It also reduces the nitro group of nitroester and nitroaromatic compounds. It could have a role in detoxification processes. The polypeptide is NADPH dehydrogenase (Bacillus pumilus (strain SAFR-032)).